We begin with the raw amino-acid sequence, 128 residues long: uncharacterized protein (128 aa).

This is an uncharacterized protein from Mycoplasma pneumoniae (strain ATCC 29342 / M129 / Subtype 1) (Mycoplasmoides pneumoniae).